Reading from the N-terminus, the 119-residue chain is Large ribosomal subunit protein uL14 (119 aa).

This sequence belongs to the universal ribosomal protein uL14 family. As to quaternary structure, part of the 50S ribosomal subunit. Forms a cluster with proteins L3 and L19. In the 70S ribosome, L14 and L19 interact and together make contacts with the 16S rRNA in bridges B5 and B8.

Its function is as follows. Binds to 23S rRNA. Forms part of two intersubunit bridges in the 70S ribosome. The sequence is that of Large ribosomal subunit protein uL14 from Neorickettsia sennetsu (strain ATCC VR-367 / Miyayama) (Ehrlichia sennetsu).